The following is a 172-amino-acid chain: Small t antigen (172 aa).

Met1 is subject to N-acetylmethionine; by host. The J domain maps to 12–75 (ELMDLLGLER…VKVAHQPDFG (64 aa)). The C4-type; atypical zinc finger occupies 101 to 114 (CATKPSAHCPCMLC). Residues 120 to 141 (HVYRKFLRRDPLVWIDCYCFDC) form an H1C3-type; atypical zinc finger.

As to quaternary structure, interacts with host PPP2R1A; the interaction inhibits PP2A activity.

It localises to the host cytoplasm. The protein resides in the host nucleus. In terms of biological role, promotes efficient viral genome replication by accelerating both G1 and S phase progression of the cell cycle. Inhibits host PP2A by binding to the A subunit, thereby displacing lower affinity regulatory B subunit. Inactivation of PP2A in turn results in the transactivation of cyclin A and cyclin D1 promoters. Late during the infection cycle, ST may induce dephosphorylation of host MTOR, leading to the inhibition of cap-dependent translation. May establish and maintain high levels of viral genomes during persistent infection in cell culture. In Simian virus 12 (strain wt100) (SV-12), this protein is Small t antigen.